The sequence spans 222 residues: Pyridoxine/pyridoxamine 5'-phosphate oxidase (222 aa).

Residues 16–19 (RVSY) and Lys-75 each bind substrate. FMN contacts are provided by residues 70–75 (RTVLCK), 85–86 (FT), Lys-92, and Gln-114. Substrate is bound by residues Tyr-132, Arg-136, and Ser-140. FMN-binding positions include 149 to 150 (QS) and Trp-195. 201–203 (RLH) is a substrate binding site. Arg-205 serves as a coordination point for FMN.

This sequence belongs to the pyridoxamine 5'-phosphate oxidase family. As to quaternary structure, homodimer. Requires FMN as cofactor.

The enzyme catalyses pyridoxamine 5'-phosphate + O2 + H2O = pyridoxal 5'-phosphate + H2O2 + NH4(+). It carries out the reaction pyridoxine 5'-phosphate + O2 = pyridoxal 5'-phosphate + H2O2. It functions in the pathway cofactor metabolism; pyridoxal 5'-phosphate salvage; pyridoxal 5'-phosphate from pyridoxamine 5'-phosphate: step 1/1. The protein operates within cofactor metabolism; pyridoxal 5'-phosphate salvage; pyridoxal 5'-phosphate from pyridoxine 5'-phosphate: step 1/1. Catalyzes the oxidation of either pyridoxine 5'-phosphate (PNP) or pyridoxamine 5'-phosphate (PMP) into pyridoxal 5'-phosphate (PLP). This Saccharopolyspora erythraea (strain ATCC 11635 / DSM 40517 / JCM 4748 / NBRC 13426 / NCIMB 8594 / NRRL 2338) protein is Pyridoxine/pyridoxamine 5'-phosphate oxidase.